Consider the following 412-residue polypeptide: Pentatricopeptide repeat-containing protein At3g60980, mitochondrial (412 aa).

A mitochondrion-targeting transit peptide spans Met-1–Pro-18. 9 PPR repeats span residues Thr-69–Pro-104, Asn-105–His-139, Ser-143–Pro-178, Asp-179–Ala-213, Val-230–Leu-264, Cys-266–Lys-296, Asp-305–Leu-339, Ile-344–Tyr-371, and Asp-373–Glu-407.

The protein belongs to the PPR family. P subfamily.

It localises to the mitochondrion. This Arabidopsis thaliana (Mouse-ear cress) protein is Pentatricopeptide repeat-containing protein At3g60980, mitochondrial.